Reading from the N-terminus, the 160-residue chain is Transcription antitermination protein NusB (160 aa).

Belongs to the NusB family.

Involved in transcription antitermination. Required for transcription of ribosomal RNA (rRNA) genes. Binds specifically to the boxA antiterminator sequence of the ribosomal RNA (rrn) operons. The sequence is that of Transcription antitermination protein NusB from Maricaulis maris (strain MCS10) (Caulobacter maris).